The sequence spans 289 residues: MERPQLDSMSQDLSEALKEATKEVHIRAENSEFMRNFQKGQVSREGFKLVMASLYHIYTALEEEIERNKQNPVYAPLYFPEELHRRAALEQDMAFWYGPHWQEAIPYTPATQHYVKRLHEVGGTHPELLVAHAYTRYLGDLSGGQVLKKIAQKAMALPSSGEGLAFFTFPSIDNPTKFKQLYRARMNTLEMTPEVKHRVTEEAKTAFLLNIELFEELQALLTEEHKDQSPSQTEFLRQRPASLVQDTTSAETPRGKSQISTSSSQTPLLRWVLTLSFLLATVAVGIYAM.

At 1 to 266 the chain is on the cytoplasmic side; sequence MERPQLDSMS…SQISTSSSQT (266 aa). The heme b site is built by Lys-18, His-25, Tyr-134, and Arg-183. The segment at 225 to 261 is disordered; the sequence is HKDQSPSQTEFLRQRPASLVQDTTSAETPRGKSQIST. 2 positions are modified to phosphoserine: Ser-229 and Ser-242. The segment covering 244 to 261 has biased composition (polar residues); sequence VQDTTSAETPRGKSQIST. Residues 267 to 289 traverse the membrane as a helical; Anchor for type IV membrane protein segment; sequence PLLRWVLTLSFLLATVAVGIYAM.

Belongs to the heme oxygenase family. As to quaternary structure, homodimer and higher order homooligomer. Oligomerization is crucial for its stability and function in the endoplasmic reticulum. Interacts with FLVCR2; this interaction is potentiated in the presence of heme. A soluble form arises by proteolytic removal of the membrane anchor.

The protein resides in the endoplasmic reticulum membrane. The catalysed reaction is heme b + 3 reduced [NADPH--hemoprotein reductase] + 3 O2 = biliverdin IXalpha + CO + Fe(2+) + 3 oxidized [NADPH--hemoprotein reductase] + 3 H2O + H(+). With respect to regulation, inhibited by metalloporphyrins such as Sn- and Zn-protoporphyrins. Catalyzes the oxidative cleavage of heme at the alpha-methene bridge carbon, released as carbon monoxide (CO), to generate biliverdin IXalpha, while releasing the central heme iron chelate as ferrous iron. Affords protection against programmed cell death and this cytoprotective effect relies on its ability to catabolize free heme and prevent it from sensitizing cells to undergo apoptosis. In terms of biological role, catalyzes the oxidative cleavage of heme at the alpha-methene bridge carbon, released as carbon monoxide (CO), to generate biliverdin IXalpha, while releasing the central heme iron chelate as ferrous iron. In Rattus norvegicus (Rat), this protein is Heme oxygenase 1 (Hmox1).